A 1140-amino-acid polypeptide reads, in one-letter code: TBC1 domain family member 8 (1140 aa).

GRAM domains lie at 145-212 (VKFE…ERTS) and 285-353 (EFFR…EKME). The region spanning 505–692 (GIPESLRGRL…NVVDCFFYDG (188 aa)) is the Rab-GAP TBC domain. The segment at 1031-1070 (GQRGSSSGSCSQECGEELRASAPSPEDSVFADTGKTPQDS) is disordered. The span at 1032 to 1043 (QRGSSSGSCSQE) shows a compositional bias: low complexity.

In terms of biological role, may act as a GTPase-activating protein for Rab family protein(s). The sequence is that of TBC1 domain family member 8 (TBC1D8) from Homo sapiens (Human).